A 590-amino-acid chain; its full sequence is Arginine--tRNA ligase (590 aa).

The short motif at 130 to 140 (PNIAKEMHVGH) is the 'HIGH' region element.

The protein belongs to the class-I aminoacyl-tRNA synthetase family. As to quaternary structure, monomer.

It is found in the cytoplasm. It catalyses the reaction tRNA(Arg) + L-arginine + ATP = L-arginyl-tRNA(Arg) + AMP + diphosphate. The protein is Arginine--tRNA ligase of Synechococcus sp. (strain CC9605).